The primary structure comprises 62 residues: Cytochrome b-c1 complex subunit 6-2, mitochondrial (62 aa).

2 disulfides stabilise this stretch: Cys17-Cys59 and Cys31-Cys45.

It belongs to the UQCRH/QCR6 family. As to quaternary structure, component of the ubiquinol-cytochrome c oxidoreductase (cytochrome b-c1 complex, complex III, CIII), a multisubunit enzyme composed of 10 subunits. The complex is composed of 3 respiratory subunits cytochrome b (MT-CYB), cytochrome c1 (CYC1-1 or CYC1-2) and Rieske protein (UCR1-1 or UCR1-2), 2 core protein subunits MPPalpha1 (or MPPalpha2) and MPPB, and 5 low-molecular weight protein subunits QCR7-1 (or QCR7-2), UCRQ-1 (or UCRQ-2), QCR9, UCRY and probably QCR6-1 (or QCR6-2). The complex exists as an obligatory dimer and forms supercomplexes (SCs) in the inner mitochondrial membrane with NADH-ubiquinone oxidoreductase (complex I, CI), resulting in different assemblies (supercomplexes SCI(1)III(2) and SCI(2)III(4)).

It is found in the mitochondrion inner membrane. Functionally, component of the ubiquinol-cytochrome c oxidoreductase, a multisubunit transmembrane complex that is part of the mitochondrial electron transport chain which drives oxidative phosphorylation. The respiratory chain contains 3 multisubunit complexes succinate dehydrogenase (complex II, CII), ubiquinol-cytochrome c oxidoreductase (cytochrome b-c1 complex, complex III, CIII) and cytochrome c oxidase (complex IV, CIV), that cooperate to transfer electrons derived from NADH and succinate to molecular oxygen, creating an electrochemical gradient over the inner membrane that drives transmembrane transport and the ATP synthase. The cytochrome b-c1 complex catalyzes electron transfer from ubiquinol to cytochrome c, linking this redox reaction to translocation of protons across the mitochondrial inner membrane, with protons being carried across the membrane as hydrogens on the quinol. In the process called Q cycle, 2 protons are consumed from the matrix, 4 protons are released into the intermembrane space and 2 electrons are passed to cytochrome c. The sequence is that of Cytochrome b-c1 complex subunit 6-2, mitochondrial (QCR6-2) from Arabidopsis thaliana (Mouse-ear cress).